Here is a 198-residue protein sequence, read N- to C-terminus: Dual specificity protein phosphatase 14 (198 aa).

The region spanning 26-167 (GIAQITSSLF…LIDYESQLFG (142 aa)) is the Tyrosine-protein phosphatase domain. The active-site Phosphocysteine intermediate is the Cys-111.

Belongs to the protein-tyrosine phosphatase family. Non-receptor class dual specificity subfamily.

It carries out the reaction O-phospho-L-tyrosyl-[protein] + H2O = L-tyrosyl-[protein] + phosphate. It catalyses the reaction O-phospho-L-seryl-[protein] + H2O = L-seryl-[protein] + phosphate. The enzyme catalyses O-phospho-L-threonyl-[protein] + H2O = L-threonyl-[protein] + phosphate. Functionally, involved in the inactivation of MAP kinases. Dephosphorylates ERK, JNK and p38 MAP-kinases. Plays a negative role in TCR signaling by dephosphorylating MAP3K7 adapter TAB1 leading to its inactivation. This is Dual specificity protein phosphatase 14 (Dusp14) from Mus musculus (Mouse).